We begin with the raw amino-acid sequence, 231 residues long: Lipoprotein-releasing system ATP-binding protein LolD (231 aa).

Residues 6-231 enclose the ABC transporter domain; the sequence is LKCQSVHKVY…VLAKVAPNSL (226 aa). An ATP-binding site is contributed by 42 to 49; the sequence is GASGSGKS.

It belongs to the ABC transporter superfamily. Lipoprotein translocase (TC 3.A.1.125) family. The complex is composed of two ATP-binding proteins (LolD) and two transmembrane proteins (LolC and LolE).

Its subcellular location is the cell inner membrane. Its function is as follows. Part of the ABC transporter complex LolCDE involved in the translocation of mature outer membrane-directed lipoproteins, from the inner membrane to the periplasmic chaperone, LolA. Responsible for the formation of the LolA-lipoprotein complex in an ATP-dependent manner. This chain is Lipoprotein-releasing system ATP-binding protein LolD, found in Hahella chejuensis (strain KCTC 2396).